A 251-amino-acid chain; its full sequence is Large ribosomal subunit protein uL2 (251 aa).

The span at 1-12 shows a compositional bias: basic residues; the sequence is MGKRLRVQRHGR. The tract at residues 1–22 is disordered; that stretch reads MGKRLRVQRHGRGTPQWRNRGH.

This sequence belongs to the universal ribosomal protein uL2 family. In terms of assembly, part of the 50S ribosomal subunit. Forms a bridge to the 30S subunit in the 70S ribosome.

In terms of biological role, one of the primary rRNA binding proteins. Required for association of the 30S and 50S subunits to form the 70S ribosome, for tRNA binding and peptide bond formation. It has been suggested to have peptidyltransferase activity; this is somewhat controversial. Makes several contacts with the 16S rRNA in the 70S ribosome. The protein is Large ribosomal subunit protein uL2 of Ignicoccus hospitalis (strain KIN4/I / DSM 18386 / JCM 14125).